A 197-amino-acid polypeptide reads, in one-letter code: Pyridoxal 5'-phosphate synthase subunit PdxT (197 aa).

50 to 52 (GES) serves as a coordination point for L-glutamine. Cysteine 82 (nucleophile) is an active-site residue. L-glutamine is bound by residues arginine 111 and 140–141 (IR). Catalysis depends on charge relay system residues histidine 176 and glutamate 178.

The protein belongs to the glutaminase PdxT/SNO family. As to quaternary structure, in the presence of PdxS, forms a dodecamer of heterodimers. Only shows activity in the heterodimer.

It carries out the reaction aldehydo-D-ribose 5-phosphate + D-glyceraldehyde 3-phosphate + L-glutamine = pyridoxal 5'-phosphate + L-glutamate + phosphate + 3 H2O + H(+). The catalysed reaction is L-glutamine + H2O = L-glutamate + NH4(+). The protein operates within cofactor biosynthesis; pyridoxal 5'-phosphate biosynthesis. Its function is as follows. Catalyzes the hydrolysis of glutamine to glutamate and ammonia as part of the biosynthesis of pyridoxal 5'-phosphate. The resulting ammonia molecule is channeled to the active site of PdxS. In Streptomyces griseus subsp. griseus (strain JCM 4626 / CBS 651.72 / NBRC 13350 / KCC S-0626 / ISP 5235), this protein is Pyridoxal 5'-phosphate synthase subunit PdxT.